The sequence spans 270 residues: 4-hydroxy-tetrahydrodipicolinate reductase (270 aa).

NAD(+) is bound by residues Gly11–Met16 and Glu37. Arg38 is an NADP(+) binding site. NAD(+) is bound by residues Gly101–Thr103 and Ala125–Phe128. Catalysis depends on His158, which acts as the Proton donor/acceptor. His159 contacts (S)-2,3,4,5-tetrahydrodipicolinate. The Proton donor role is filled by Lys162. (S)-2,3,4,5-tetrahydrodipicolinate is bound at residue Gly168–Thr169.

Belongs to the DapB family.

It localises to the cytoplasm. It carries out the reaction (S)-2,3,4,5-tetrahydrodipicolinate + NAD(+) + H2O = (2S,4S)-4-hydroxy-2,3,4,5-tetrahydrodipicolinate + NADH + H(+). The enzyme catalyses (S)-2,3,4,5-tetrahydrodipicolinate + NADP(+) + H2O = (2S,4S)-4-hydroxy-2,3,4,5-tetrahydrodipicolinate + NADPH + H(+). The protein operates within amino-acid biosynthesis; L-lysine biosynthesis via DAP pathway; (S)-tetrahydrodipicolinate from L-aspartate: step 4/4. Catalyzes the conversion of 4-hydroxy-tetrahydrodipicolinate (HTPA) to tetrahydrodipicolinate. The sequence is that of 4-hydroxy-tetrahydrodipicolinate reductase from Tolumonas auensis (strain DSM 9187 / NBRC 110442 / TA 4).